The following is a 639-amino-acid chain: Zinc finger protein ZIC 5 (639 aa).

4 disordered regions span residues 113 to 171 (PCGG…GHSR), 189 to 251 (HGAP…GHPH), 323 to 355 (PGPH…HLPG), and 379 to 409 (PDEL…PCSK). Over residues 124–150 (SAPPPPAPPLPPTPSPPPPPPPPPPPA) the composition is skewed to pro residues. Pro residues-rich tracts occupy residues 331-343 (APPP…PAPA) and 385-401 (LPPP…PPPA). Residues 434-461 (HVCFWEDCPREGKPFKAKYKLINHIRVH) form a C2H2-type 1; atypical zinc finger. C2H2-type zinc fingers lie at residues 467–491 (FPCP…KRTH), 497–521 (FKCE…SHVH), and 527–551 (YYCK…MKIH). The disordered stretch occupies residues 548 to 568 (MKIHCKSPPPSPGPLGYSSVG). Residues S554, S558, and S576 each carry the phosphoserine modification. The tract at residues 607 to 639 (APSHLHTPSSNGTTSETEDEEIYGNPEVVRTIH) is disordered. Positions 612–621 (HTPSSNGTTS) are enriched in polar residues.

Belongs to the GLI C2H2-type zinc-finger protein family.

It is found in the nucleus. In terms of biological role, essential for neural crest development, converting cells from an epidermal fate to a neural crest cell fate. Binds to DNA. In Homo sapiens (Human), this protein is Zinc finger protein ZIC 5 (ZIC5).